Consider the following 66-residue polypeptide: uncharacterized protein (66 aa).

This is an uncharacterized protein from Escherichia coli O157:H7.